The following is a 254-amino-acid chain: Anamorsin homolog (254 aa).

The tract at residues 4–132 (VQENNHVLYI…EIGSAAKLSL (129 aa)) is N-terminal SAM-like domain. Residues 132-167 (LGGNKAKVAAVWKLDVDDDDDERIDEDELLDEEDKV) form a linker region. Positions 177, 186, 189, and 191 each coordinate [2Fe-2S] cluster. The fe-S binding site A stretch occupies residues 177 to 191 (CGTTGKRKACKDCSC). Residues Cys215, Cys218, Cys226, and Cys229 each coordinate [4Fe-4S] cluster. Short sequence motifs (cx2C motif) lie at residues 215 to 218 (CGSC) and 226 to 229 (CATC). A fe-S binding site B region spans residues 215–229 (CGSCYLGDAFRCATC).

The protein belongs to the anamorsin family. Monomer. It depends on [2Fe-2S] cluster as a cofactor. [4Fe-4S] cluster serves as cofactor.

The protein localises to the cytoplasm. Its subcellular location is the mitochondrion intermembrane space. Its function is as follows. Component of the cytosolic iron-sulfur (Fe-S) protein assembly (CIA) machinery. Required for the maturation of extramitochondrial Fe-S proteins. Part of an electron transfer chain functioning in an early step of cytosolic Fe-S biogenesis, facilitating the de novo assembly of a [4Fe-4S] cluster on the cytosolic Fe-S scaffold complex. Electrons are transferred from NADPH via a FAD- and FMN-containing diflavin oxidoreductase. Together with the diflavin oxidoreductase, also required for the assembly of the diferric tyrosyl radical cofactor of ribonucleotide reductase (RNR), probably by providing electrons for reduction during radical cofactor maturation in the catalytic small subunit. The protein is Anamorsin homolog of Aedes aegypti (Yellowfever mosquito).